We begin with the raw amino-acid sequence, 366 residues long: D-alanine--D-alanine ligase (366 aa).

The ATP-grasp domain occupies 148–357 (KMTFEQAGLA…FPELVDRLIQ (210 aa)). ATP is bound at residue 184-239 (EAALGYPAFVKPANLGSSVGIAKVRSRQELEAALDNAASYDRRLVVEAGVVAREVE). The Mg(2+) site is built by Asp310, Glu324, and Asn326.

Belongs to the D-alanine--D-alanine ligase family. Mg(2+) is required as a cofactor. The cofactor is Mn(2+).

It is found in the cytoplasm. The catalysed reaction is 2 D-alanine + ATP = D-alanyl-D-alanine + ADP + phosphate + H(+). It participates in cell wall biogenesis; peptidoglycan biosynthesis. Functionally, cell wall formation. The polypeptide is D-alanine--D-alanine ligase (Nostoc punctiforme (strain ATCC 29133 / PCC 73102)).